An 88-amino-acid chain; its full sequence is Kunitz-type U15-theraphotoxin-Hs1g (88 aa).

Residues methionine 1–alanine 27 form the signal peptide. Positions glutamate 28–arginine 33 are excised as a propeptide. Residues cysteine 37–cysteine 85 form the BPTI/Kunitz inhibitor domain. 3 disulfides stabilise this stretch: cysteine 37–cysteine 85, cysteine 46–cysteine 68, and cysteine 60–cysteine 81.

It belongs to the venom Kunitz-type family. 03 (sub-Kunitz) subfamily. As to expression, expressed by the venom gland.

It is found in the secreted. Functionally, serine protease inhibitor that inhibits trypsin at a molar ratio of 1:1. The protein is Kunitz-type U15-theraphotoxin-Hs1g of Cyriopagopus schmidti (Chinese bird spider).